The chain runs to 295 residues: Transcriptional regulator SirC (295 aa).

The HTH araC/xylS-type domain occupies glutamate 195–threonine 292. DNA-binding regions (H-T-H motif) lie at residues alanine 212–glutamate 233 and isoleucine 259–phenylalanine 282.

Functionally, positive regulator of the expression of the invasion-associated type III secretion system encoded within SPI-1 (pathogenicity island 1). The polypeptide is Transcriptional regulator SirC (sirC) (Salmonella typhimurium (strain SL1344)).